Consider the following 81-residue polypeptide: Cytochrome b559 subunit alpha (81 aa).

The helical transmembrane segment at Val-21–Trp-35 threads the bilayer. Residue His-23 participates in heme binding.

Belongs to the PsbE/PsbF family. Heterodimer of an alpha subunit and a beta subunit. PSII is composed of 1 copy each of membrane proteins PsbA, PsbB, PsbC, PsbD, PsbE, PsbF, PsbH, PsbI, PsbJ, PsbK, PsbL, PsbM, PsbT, PsbX, PsbY, PsbZ, Psb30/Ycf12, peripheral proteins PsbO, CyanoQ (PsbQ), PsbU, PsbV and a large number of cofactors. It forms dimeric complexes. Requires heme b as cofactor.

Its subcellular location is the cellular thylakoid membrane. Its function is as follows. This b-type cytochrome is tightly associated with the reaction center of photosystem II (PSII). PSII is a light-driven water:plastoquinone oxidoreductase that uses light energy to abstract electrons from H(2)O, generating O(2) and a proton gradient subsequently used for ATP formation. It consists of a core antenna complex that captures photons, and an electron transfer chain that converts photonic excitation into a charge separation. This is Cytochrome b559 subunit alpha from Synechococcus sp. (strain JA-2-3B'a(2-13)) (Cyanobacteria bacterium Yellowstone B-Prime).